A 442-amino-acid chain; its full sequence is UDP-N-acetylmuramate--L-alanine ligase (442 aa).

109–115 provides a ligand contact to ATP; that stretch reads GAHGKTS.

The protein belongs to the MurCDEF family.

It is found in the cytoplasm. The enzyme catalyses UDP-N-acetyl-alpha-D-muramate + L-alanine + ATP = UDP-N-acetyl-alpha-D-muramoyl-L-alanine + ADP + phosphate + H(+). It functions in the pathway cell wall biogenesis; peptidoglycan biosynthesis. Cell wall formation. This is UDP-N-acetylmuramate--L-alanine ligase from Streptococcus pyogenes serotype M6 (strain ATCC BAA-946 / MGAS10394).